The chain runs to 113 residues: MAKNRFPGLGGGFNINQLQKQAKKIQEEIEKLQEELNQREIEATAGGGAVKVVINGKKEIKSIEISPEVVDPDDIETLQDLIVACVNEAIRKVEKMIEEEMQKVAGFGFTGLF.

This sequence belongs to the YbaB/EbfC family. In terms of assembly, homodimer.

Its subcellular location is the cytoplasm. The protein localises to the nucleoid. Functionally, binds to DNA and alters its conformation. May be involved in regulation of gene expression, nucleoid organization and DNA protection. The polypeptide is Nucleoid-associated protein Csac_1593 (Caldicellulosiruptor saccharolyticus (strain ATCC 43494 / DSM 8903 / Tp8T 6331)).